The primary structure comprises 220 residues: Iron-sulfur cluster repair protein YtfE (220 aa).

It belongs to the RIC family. YtfE subfamily. As to quaternary structure, homodimer.

Its subcellular location is the cytoplasm. Its function is as follows. Di-iron-containing protein involved in the repair of iron-sulfur clusters damaged by oxidative and nitrosative stress conditions. The protein is Iron-sulfur cluster repair protein YtfE of Escherichia coli O6:K15:H31 (strain 536 / UPEC).